The primary structure comprises 453 residues: Asparagine--tRNA ligase (453 aa).

It belongs to the class-II aminoacyl-tRNA synthetase family. Homodimer.

It localises to the cytoplasm. It catalyses the reaction tRNA(Asn) + L-asparagine + ATP = L-asparaginyl-tRNA(Asn) + AMP + diphosphate + H(+). The protein is Asparagine--tRNA ligase of Malacoplasma penetrans (strain HF-2) (Mycoplasma penetrans).